Here is a 357-residue protein sequence, read N- to C-terminus: Hydroxyproline O-arabinosyltransferase RDN1 (357 aa).

A helical; Signal-anchor transmembrane segment spans residues 13–33 (LLMLLMVLGFSFATYNLVFMM).

Expressed in the vasculature of leaves, petioles, stems and roots. Expressed in the vascular cylinder throughout the root, and nodule vasculature.

The protein localises to the golgi apparatus membrane. The enzyme catalyses trans-4-hydroxy-L-prolyl-[protein] + UDP-beta-L-arabinofuranose = O-(beta-L-arabinofuranosyl)-trans-4-hydroxy-L-prolyl-[protein] + UDP + H(+). Its function is as follows. Probable glycosyltransferase involved in the O-arabinosylation of several proteins including extensins and small signaling peptides. Catalyzes the transfer of the initial L-arabinose to the hydroxyl group of Hyp residues. Probably involved in the arabinosylation of CLE12, a signaling peptide that moves from root to shoot, to interact with SUNN receptor kinase signaling that regulates nodulation. Involved in long distance nodulation signaling events. Involved in the autoregulation of nodulation (AON), a long distance systemic signaling from root to shoot and back again, which allows legumes to limit the number of root nodules formed based on available nitrogen and previous rhizobial colonization. Functions in the root, upstream of the shoot receptor kinase SUNN and via CLE peptide, to control AON. The polypeptide is Hydroxyproline O-arabinosyltransferase RDN1 (Medicago truncatula (Barrel medic)).